The sequence spans 359 residues: NADH-quinone oxidoreductase subunit H (359 aa).

The next 8 helical transmembrane spans lie at 16 to 36 (IWPATVWPVLWVLIKIVAVLA), 94 to 114 (GLFILGPIMTIMPALAAWAVI), 128 to 148 (GLLFIMAITSLEVYGVIIAGW), 167 to 187 (VSYEIAMGFCLVVVLMVSGSL), 205 to 225 (GLTFLSWNWLPLLPIFVVYFI), 261 to 281 (FFLAEYANMILVSVLCVLLFL), 296 to 316 (IPGWIWLGLKTFVVVTIFLWV), and 331 to 351 (LGWKIFIPVTLVWLVVVGAWM).

This sequence belongs to the complex I subunit 1 family. As to quaternary structure, NDH-1 is composed of 14 different subunits. Subunits NuoA, H, J, K, L, M, N constitute the membrane sector of the complex.

It is found in the cell inner membrane. It catalyses the reaction a quinone + NADH + 5 H(+)(in) = a quinol + NAD(+) + 4 H(+)(out). Its function is as follows. NDH-1 shuttles electrons from NADH, via FMN and iron-sulfur (Fe-S) centers, to quinones in the respiratory chain. The immediate electron acceptor for the enzyme in this species is believed to be ubiquinone. Couples the redox reaction to proton translocation (for every two electrons transferred, four hydrogen ions are translocated across the cytoplasmic membrane), and thus conserves the redox energy in a proton gradient. This subunit may bind ubiquinone. This Polaromonas naphthalenivorans (strain CJ2) protein is NADH-quinone oxidoreductase subunit H.